The following is a 146-amino-acid chain: Snaclec rhodocytin subunit beta (146 aa).

Positions 1–23 (MGRFIFVSFGLLVVFLSLSGTGA) are cleaved as a signal peptide. 3 cysteine pairs are disulfide-bonded: cysteine 25–cysteine 36, cysteine 53–cysteine 142, and cysteine 119–cysteine 134. The 112-residue stretch at 32–143 (YEGHCYKPFN…CSSTCSFVCK (112 aa)) folds into the C-type lectin domain.

The protein belongs to the snaclec family. In terms of assembly, dimer (non-covalently linked) of heterodimers of subunits alpha and beta (disulfide-linked). In terms of tissue distribution, expressed by the venom gland.

It is found in the secreted. Elicits platelet aggregation by the binding to the C-type lectin domain family 1 member B (CLEC1B/CLEC2). Binding leads to tyrosine phosphorylation in the cytoplasmic tail of CLEC1B, which promotes the binding of spleen tyrosine kinase (Syk), subsequent activation of PLCgamma2, and platelet activation and aggregation. Binding to GPIbalpha (GP1BA) and alpha2/beta-1 (ITGA2/ITGB1) may also induce aggregation, but this is controversial. In Calloselasma rhodostoma (Malayan pit viper), this protein is Snaclec rhodocytin subunit beta.